Consider the following 438-residue polypeptide: MADYQGKNVVIIGLGLTGLSCVDFFLARGVTPRVMDTRMTPPGLDKLPEAVERHTGGLNDEWLMAADLIVASPGIALAHPSLSAAADAGIEIVGDIELFCREAQAPIVAITGSNGKSTVTTLVGEMAKAAGVNVGVGGNIGLPALMLLDDECELYVLELSSFQLETTSSLQAVAATILNVTEDHMDRYPFGLQQYRAAKLRIYENAKVCVVNADDALTMPIRGADERCVSFGVNMGDYHLNHQQGETWLRVKGEKVLNVKEMKLSGQHNYTNALAALALADAAGLPRASSLKALTTFTGLPHRFEVVLEHNGVRWVNDSKATNVGSTEAALNGLHVDGTLHLLLGGDGKSADFSPLARYLNGDNVRLYCFGRDGAQLAALRPEVAEQTETMEQAMRLLATRVQPGDMVLLSPACASLDQFKNFEQRGNEFARLAKELG.

Gly-112–Thr-118 is an ATP binding site.

This sequence belongs to the MurCDEF family.

The protein localises to the cytoplasm. It catalyses the reaction UDP-N-acetyl-alpha-D-muramoyl-L-alanine + D-glutamate + ATP = UDP-N-acetyl-alpha-D-muramoyl-L-alanyl-D-glutamate + ADP + phosphate + H(+). It functions in the pathway cell wall biogenesis; peptidoglycan biosynthesis. Cell wall formation. Catalyzes the addition of glutamate to the nucleotide precursor UDP-N-acetylmuramoyl-L-alanine (UMA). The sequence is that of UDP-N-acetylmuramoylalanine--D-glutamate ligase (murD) from Escherichia coli O6:H1 (strain CFT073 / ATCC 700928 / UPEC).